The sequence spans 324 residues: Acetyl-coenzyme A carboxylase carboxyl transferase subunit alpha (324 aa).

Residues 37 to 291 form the CoA carboxyltransferase C-terminal domain; it reads KLDKRLDRLK…QEYVLQEWVK (255 aa).

It belongs to the AccA family. In terms of assembly, acetyl-CoA carboxylase is a heterohexamer composed of biotin carboxyl carrier protein (AccB), biotin carboxylase (AccC) and two subunits each of ACCase subunit alpha (AccA) and ACCase subunit beta (AccD).

The protein resides in the cytoplasm. The catalysed reaction is N(6)-carboxybiotinyl-L-lysyl-[protein] + acetyl-CoA = N(6)-biotinyl-L-lysyl-[protein] + malonyl-CoA. Its pathway is lipid metabolism; malonyl-CoA biosynthesis; malonyl-CoA from acetyl-CoA: step 1/1. Its function is as follows. Component of the acetyl coenzyme A carboxylase (ACC) complex. First, biotin carboxylase catalyzes the carboxylation of biotin on its carrier protein (BCCP) and then the CO(2) group is transferred by the carboxyltransferase to acetyl-CoA to form malonyl-CoA. The protein is Acetyl-coenzyme A carboxylase carboxyl transferase subunit alpha of Chlamydia trachomatis serovar L2 (strain ATCC VR-902B / DSM 19102 / 434/Bu).